Reading from the N-terminus, the 460-residue chain is U-box domain-containing protein 9 (460 aa).

The U-box domain occupies 73–147 (SCPEEFRCPL…SKWCKKNGLE (75 aa)). ARM repeat units follow at residues 201–244 (TEFR…NISI), 248–287 (SNKK…TLSA), and 289–328 (DSNK…TLCI).

As to quaternary structure, binds to SD11, SD16, SD17, SD18, SD113, SD129 and SD25. In terms of processing, phosphorylated by SD1-6 and SD1-7.

It localises to the nucleus. It is found in the cell membrane. It catalyses the reaction S-ubiquitinyl-[E2 ubiquitin-conjugating enzyme]-L-cysteine + [acceptor protein]-L-lysine = [E2 ubiquitin-conjugating enzyme]-L-cysteine + N(6)-ubiquitinyl-[acceptor protein]-L-lysine.. The protein operates within protein modification; protein ubiquitination. Its function is as follows. Functions as an E3 ubiquitin ligase. May be involved in the abscisic acid-mediated signaling pathway, at least during germination. The polypeptide is U-box domain-containing protein 9 (PUB9) (Arabidopsis thaliana (Mouse-ear cress)).